The following is a 1053-amino-acid chain: Translation initiation factor IF-2 (1053 aa).

Positions 1–20 are enriched in polar residues; the sequence is MSESKNSGENTLSVTPTKTL. The interval 1 to 442 is disordered; sequence MSESKNSGEN…TATGGEEEER (442 aa). Low complexity-rich tracts occupy residues 64 to 76 and 83 to 102; these read EAAP…ATVT and RPAA…AAVP. Composition is skewed to pro residues over residues 131–141 and 150–161; these read PAQPKAEPVPA and APVPPVPAPSAP. Low complexity predominate over residues 178 to 220; the sequence is PVSQAKPIQTAPVQTAPAAQASASQTTGPRPVAAGPRPATGAA. Positions 255–264 are enriched in gly residues; that stretch reads GGRGGPGRGE. Basic and acidic residues-rich tracts occupy residues 279–288 and 295–353; these read LTDEEREARA and RIRE…EAKR. Over residues 375–386 the composition is skewed to low complexity; it reads TATAAAPAAAAP. The 171-residue stretch at 550-720 folds into the tr-type G domain; that stretch reads PRPPVVTIMG…ALQAELLDLK (171 aa). Residues 559–566 are G1; the sequence is GHVDHGKT. 559–566 lines the GTP pocket; the sequence is GHVDHGKT. The G2 stretch occupies residues 584–588; sequence GITQH. The interval 606–609 is G3; it reads DTPG. GTP is bound by residues 606–610 and 660–663; these read DTPGH and NKID. Residues 660–663 form a G4 region; sequence NKID. Residues 696–698 form a G5 region; that stretch reads SAT.

The protein belongs to the TRAFAC class translation factor GTPase superfamily. Classic translation factor GTPase family. IF-2 subfamily.

The protein resides in the cytoplasm. Functionally, one of the essential components for the initiation of protein synthesis. Protects formylmethionyl-tRNA from spontaneous hydrolysis and promotes its binding to the 30S ribosomal subunits. Also involved in the hydrolysis of GTP during the formation of the 70S ribosomal complex. In Beijerinckia indica subsp. indica (strain ATCC 9039 / DSM 1715 / NCIMB 8712), this protein is Translation initiation factor IF-2.